Reading from the N-terminus, the 415-residue chain is Maltose excess protein 1, chloroplastic (415 aa).

The segment at 74-93 (SESDSDSDFPHENQQGNPGL) is disordered. The next 9 helical transmembrane spans lie at 139–159 (ALSA…LSLL), 176–196 (LGVV…AMPI), 199–219 (FVAT…YYFG), 231–251 (DVIT…TFVP), 252–272 (LVPN…AAII), 286–306 (FVGS…PVSQ), 322–342 (SITM…ALFI), 345–365 (LMWL…NILC), and 373–393 (SQSF…LALW).

In terms of tissue distribution, expressed in leaves and roots. Expressed in root cap cells.

It is found in the plastid. It localises to the chloroplast inner membrane. Probable maltose transporter. Essential for the conversion of starch to sucrose in leaves at night, probably via the export of maltose from the chloroplast. Required for root cap cells formation. In Arabidopsis thaliana (Mouse-ear cress), this protein is Maltose excess protein 1, chloroplastic (MEX1).